Here is a 903-residue protein sequence, read N- to C-terminus: Immunoglobulin superfamily member 22 (903 aa).

Ig-like domains lie at 67-158 (PEFV…LLVT), 232-322 (EAIR…AELT), 418-508 (PIKF…AIVT), and 606-696 (PSVL…LHLS). Fibronectin type-III domains lie at 703-798 (FASQ…AKDP) and 804-898 (LVQD…MPPP).

The polypeptide is Immunoglobulin superfamily member 22 (IGSF22) (Homo sapiens (Human)).